Reading from the N-terminus, the 618-residue chain is Pyocin-S1 (618 aa).

It belongs to the colicin/pyosin nuclease family. In terms of assembly, purified pyocin S1 makes up a complex of the two (large and small) proteins. The large protein, but not the pyocin complex, shows in vitro DNase activity.

In terms of biological role, causes breakdown of chromosomal DNA as well as complete inhibition of lipid synthesis in sensitive cells. In Pseudomonas aeruginosa, this protein is Pyocin-S1 (pys1).